A 272-amino-acid chain; its full sequence is NADH-dependent L-xylulose reductase (272 aa).

NADP(+)-binding residues include Leu-24 and Asp-78. The Proton donor role is filled by Ser-160. The NADP(+) site is built by Tyr-175, Lys-179, and Ile-208. Tyr-175 acts as the Proton acceptor in catalysis. The active-site Lowers pKa of active site Tyr is Lys-179.

It belongs to the short-chain dehydrogenases/reductases (SDR) family.

The enzyme catalyses xylitol + NAD(+) = L-xylulose + NADH + H(+). It carries out the reaction D-arabinitol + NAD(+) = D-ribulose + NADH + H(+). Its function is as follows. NADH-dependent L-xylulose reductase; part of the yeast pathway for L-arabinose catabolism. Reversibly converts L-xylulose to xylitol and D-ribulose to D-arabinitol. It has a much lower activity with D-xylulose. Sugar alcohols can serve as a substrate when the hydroxyl group of C-2 is in the L- and the hydroxyl group of the C-3 is in the D-configuration. Also seems to be specific for sugar alcohols that have not more than 5 carbons since no activity is observed with dulcitol (galactitol), which has the hydroxyl group of C-2 in L- and of C-3 in D-configuration, but is a six-carbon sugar alcohol. The protein is NADH-dependent L-xylulose reductase of Ambrosiozyma monospora (Yeast).